The chain runs to 292 residues: Formamidopyrimidine-DNA glycosylase (292 aa).

The Schiff-base intermediate with DNA role is filled by proline 2. Glutamate 3 (proton donor) is an active-site residue. Lysine 60 serves as the catalytic Proton donor; for beta-elimination activity. 3 residues coordinate DNA: histidine 109, arginine 128, and lysine 173. Residues 258-292 form an FPG-type zinc finger; sequence NVYRRTGKKCRQCKNLIERQKISGRSTHWCRKCQK. Residue arginine 282 is the Proton donor; for delta-elimination activity of the active site.

The protein belongs to the FPG family. Monomer. Zn(2+) is required as a cofactor.

The enzyme catalyses Hydrolysis of DNA containing ring-opened 7-methylguanine residues, releasing 2,6-diamino-4-hydroxy-5-(N-methyl)formamidopyrimidine.. The catalysed reaction is 2'-deoxyribonucleotide-(2'-deoxyribose 5'-phosphate)-2'-deoxyribonucleotide-DNA = a 3'-end 2'-deoxyribonucleotide-(2,3-dehydro-2,3-deoxyribose 5'-phosphate)-DNA + a 5'-end 5'-phospho-2'-deoxyribonucleoside-DNA + H(+). Involved in base excision repair of DNA damaged by oxidation or by mutagenic agents. Acts as a DNA glycosylase that recognizes and removes damaged bases. Has a preference for oxidized purines, such as 7,8-dihydro-8-oxoguanine (8-oxoG). Has AP (apurinic/apyrimidinic) lyase activity and introduces nicks in the DNA strand. Cleaves the DNA backbone by beta-delta elimination to generate a single-strand break at the site of the removed base with both 3'- and 5'-phosphates. This is Formamidopyrimidine-DNA glycosylase from Prochlorococcus marinus subsp. pastoris (strain CCMP1986 / NIES-2087 / MED4).